The chain runs to 710 residues: Aminopeptidase P2 (710 aa).

Residues 1–79 (MIPLTLSSPS…IRKAQTKVVV (79 aa)) constitute a chloroplast transit peptide. Positions 147 and 486 each coordinate a peptide. Mn(2+)-binding residues include Asp506, Asp517, and His580. His580, His589, and Glu614 together coordinate a peptide. Positions 614 and 628 each coordinate Mn(2+).

This sequence belongs to the peptidase M24B family. As to quaternary structure, homodimer. It depends on Mn(2+) as a cofactor.

Its subcellular location is the plastid. It localises to the chloroplast. The catalysed reaction is Release of any N-terminal amino acid, including proline, that is linked to proline, even from a dipeptide or tripeptide.. Catalyzes the removal of a penultimate prolyl residue from the N-termini of peptides, such as Arg-Pro-Pro. This Arabidopsis thaliana (Mouse-ear cress) protein is Aminopeptidase P2.